A 459-amino-acid chain; its full sequence is Phosphoglucosamine mutase (459 aa).

The active-site Phosphoserine intermediate is the Ser100. Positions 100, 256, 258, and 260 each coordinate Mg(2+). A Phosphoserine modification is found at Ser100.

It belongs to the phosphohexose mutase family. Mg(2+) serves as cofactor. Activated by phosphorylation.

The enzyme catalyses alpha-D-glucosamine 1-phosphate = D-glucosamine 6-phosphate. Catalyzes the conversion of glucosamine-6-phosphate to glucosamine-1-phosphate. The polypeptide is Phosphoglucosamine mutase (Heliobacterium modesticaldum (strain ATCC 51547 / Ice1)).